Reading from the N-terminus, the 639-residue chain is Tetracycline resistance protein TetW (639 aa).

Residues 1–243 (MKIINIGILA…VTGLFQPIGE (243 aa)) form the tr-type G domain. Residues 10-17 (AHVDAGKT), 74-78 (DTPGH), and 128-131 (NKID) each bind GTP.

The protein belongs to the TRAFAC class translation factor GTPase superfamily. Classic translation factor GTPase family. TetM/TetO subfamily.

Functionally, abolishes the inhibitory effect of tetracyclin on protein synthesis by a non-covalent modification of the ribosomes. In Butyrivibrio fibrisolvens, this protein is Tetracycline resistance protein TetW (tetW).